A 395-amino-acid chain; its full sequence is ATP phosphoribosyltransferase regulatory subunit (395 aa).

It belongs to the class-II aminoacyl-tRNA synthetase family. HisZ subfamily. As to quaternary structure, heteromultimer composed of HisG and HisZ subunits.

The protein localises to the cytoplasm. Its pathway is amino-acid biosynthesis; L-histidine biosynthesis; L-histidine from 5-phospho-alpha-D-ribose 1-diphosphate: step 1/9. Its function is as follows. Required for the first step of histidine biosynthesis. May allow the feedback regulation of ATP phosphoribosyltransferase activity by histidine. This Stutzerimonas stutzeri (Pseudomonas stutzeri) protein is ATP phosphoribosyltransferase regulatory subunit.